The following is a 534-amino-acid chain: Chaperonin GroEL (534 aa).

ATP contacts are provided by residues 29–32, 86–90, glycine 413, and aspartate 494; these read TAGP and DGTTT.

The protein belongs to the chaperonin (HSP60) family. Forms a cylinder of 14 subunits composed of two heptameric rings stacked back-to-back. Interacts with the co-chaperonin GroES.

It is found in the cytoplasm. It catalyses the reaction ATP + H2O + a folded polypeptide = ADP + phosphate + an unfolded polypeptide.. Its function is as follows. Together with its co-chaperonin GroES, plays an essential role in assisting protein folding. The GroEL-GroES system forms a nano-cage that allows encapsulation of the non-native substrate proteins and provides a physical environment optimized to promote and accelerate protein folding. The sequence is that of Chaperonin GroEL from Mycoplasmoides gallisepticum (strain R(low / passage 15 / clone 2)) (Mycoplasma gallisepticum).